The sequence spans 420 residues: MAFCGPRTAARLSHSTRALHYTHRSFASPRTLNEVVIASAARTPIGSFQGTLSSLPATKLGSIAIKAAVERAGIPADEVKEVYMGNVLQAGQGQAPSRQATLGAGLAISTPTTTINKVCASGMKSVMLAAQSLMCGHQQVMVAGGMESMSNVPYCMSRGATPYGGVKLEDIIVKDGLTDVYNKFHMGNCAENTAKKLSISREEQDGFAITSYTRSKAAWDSGLIANEIAPVTIAQKGKPDIIVQEDEEYKRVDFSKFPKLKTVFQKDNGTVTAANSSTLNDGAAALVLMTAEAANRLNVTPLARIVAFADAAVDPIDFPIAPAYAIPKLLSEAGLKKEDIAMWEINEAFSVVVLANIKMLDIDPARVNVNGGAVSLGHPIGMSGARIVGHMAHALRKGQFGIAGICNGGGGASAVLIEKL.

Residues 1 to 33 (MAFCGPRTAARLSHSTRALHYTHRSFASPRTLN) constitute a mitochondrion transit peptide. Cys119 (acyl-thioester intermediate) is an active-site residue. Residues Tyr212, 251–253 (RVD), and Lys256 contribute to the CoA site. A K(+)-binding site is contributed by Tyr212. Residues Ala273 and Ala274 each contribute to the K(+) site. Ser277 serves as a coordination point for CoA. Val374 is a binding site for K(+). Cys406 acts as the Proton donor/acceptor in catalysis.

It belongs to the thiolase-like superfamily. Thiolase family. As to quaternary structure, homotetramer.

It localises to the mitochondrion. The enzyme catalyses 2 acetyl-CoA = acetoacetyl-CoA + CoA. The catalysed reaction is propanoyl-CoA + acetyl-CoA = 2-methyl-3-oxobutanoyl-CoA + CoA. The protein operates within lipid metabolism; fatty acid beta-oxidation. Its function is as follows. This is one of the enzymes that catalyzes the last step of the mitochondrial beta-oxidation pathway, an aerobic process breaking down fatty acids into acetyl-CoA. Using free coenzyme A/CoA, catalyzes the thiolytic cleavage of medium- to long-chain 3-oxoacyl-CoAs into acetyl-CoA and a fatty acyl-CoA shortened by two carbon atoms. The activity of the enzyme is reversible and it can also catalyze the condensation of two acetyl-CoA molecules into acetoacetyl-CoA. Thereby, it plays a major role in ketone body metabolism. This Xenopus laevis (African clawed frog) protein is Acetyl-CoA acetyltransferase B, mitochondrial (acat1-b).